Reading from the N-terminus, the 723-residue chain is Protein Aster-A (723 aa).

Positions 1–18 (MFDTTPHSGRSSPSSSPS) are enriched in low complexity. Residues 1–63 (MFDTTPHSGR…SGVSGTLSTQ (63 aa)) form a disordered region. The segment covering 28 to 38 (PSRPPSAPEPE) has biased composition (pro residues). The GRAM domain maps to 93–160 (EDFRKLFSKL…KEVTCLKKEK (68 aa)). Residues 257–337 (SPSGAADRSQ…DGPTSNLGPL (81 aa)) form a disordered region. S265, S269, and S273 each carry phosphoserine. Residues 302 to 314 (DSQLDASSSQTVT) show a composition bias toward polar residues. The VASt domain occupies 370–541 (SGRLLINSVF…ELAKAEKVSL (172 aa)). S418 is subject to Phosphoserine. The interval 562 to 601 (LSWRGHRDGPQHPDPDPCTQTSMHTSGSLSSRFSEPSVDQ) is disordered. A compositionally biased stretch (basic and acidic residues) spans 566–576 (GHRDGPQHPDP). Positions 579–595 (CTQTSMHTSGSLSSRFS) are enriched in polar residues. Residues 610-630 (ALVLISIVLIVLIALNALLFY) form a helical membrane-spanning segment.

Its subcellular location is the endoplasmic reticulum membrane. The protein resides in the cell membrane. It is found in the cytoplasmic vesicle. The protein localises to the autophagosome. Cholesterol transporter that mediates non-vesicular transport of cholesterol from the plasma membrane (PM) to the endoplasmic reticulum (ER). Contains unique domains for binding cholesterol and the PM, thereby serving as a molecular bridge for the transfer of cholesterol from the PM to the ER. Plays a crucial role in cholesterol homeostasis and has the unique ability to localize to the PM based on the level of membrane cholesterol. In lipid-poor conditions localizes to the ER membrane and in response to excess cholesterol in the PM is recruited to the endoplasmic reticulum-plasma membrane contact sites (EPCS) which is mediated by the GRAM domain. At the EPCS, the sterol-binding VASt/ASTER domain binds to the cholesterol in the PM and facilitates its transfer from the PM to ER. May play a role in tumor progression. Plays a role in autophagy regulation and is required for biogenesis of the autophagosome. This function in autophagy requires its cholesterol-transfer activity. The protein is Protein Aster-A of Rattus norvegicus (Rat).